The sequence spans 129 residues: Small ribosomal subunit protein uS11 (129 aa).

The disordered stretch occupies residues 109 to 129 (VDDTPVPHNGCRPKKKFRKAS). Positions 119–129 (CRPKKKFRKAS) are enriched in basic residues.

Belongs to the universal ribosomal protein uS11 family. In terms of assembly, part of the 30S ribosomal subunit. Interacts with proteins S7 and S18. Binds to the C-terminus of IF-3; however exactly how IF-3 interacts with the 30S subunit is unclear.

Functionally, located on the upper part of the platform of the 30S subunit, where it bridges several disparate RNA helices of the 16S rRNA. Forms part of the Shine-Dalgarno cleft in the 70S ribosome. The protein is Small ribosomal subunit protein uS11 (rpsK) of Thermus thermophilus (strain ATCC BAA-163 / DSM 7039 / HB27).